Here is a 130-residue protein sequence, read N- to C-terminus: Large ribosomal subunit protein bL17 (130 aa).

It belongs to the bacterial ribosomal protein bL17 family. In terms of assembly, part of the 50S ribosomal subunit. Contacts protein L32.

This Shewanella loihica (strain ATCC BAA-1088 / PV-4) protein is Large ribosomal subunit protein bL17.